Reading from the N-terminus, the 351-residue chain is Spermidine/putrescine import ATP-binding protein PotA (351 aa).

An ABC transporter domain is found at 6-236; sequence LELRNVTKEY…PENAWVANFI (231 aa). 38–45 contacts ATP; the sequence is GPSGCGKT.

The protein belongs to the ABC transporter superfamily. Spermidine/putrescine importer (TC 3.A.1.11.1) family. As to quaternary structure, the complex is composed of two ATP-binding proteins (PotA), two transmembrane proteins (PotB and PotC) and a solute-binding protein (PotD).

It is found in the cell membrane. The enzyme catalyses ATP + H2O + polyamine-[polyamine-binding protein]Side 1 = ADP + phosphate + polyamineSide 2 + [polyamine-binding protein]Side 1.. In terms of biological role, part of the ABC transporter complex PotABCD involved in spermidine/putrescine import. Responsible for energy coupling to the transport system. This Mycoplasma mycoides subsp. mycoides SC (strain CCUG 32753 / NCTC 10114 / PG1) protein is Spermidine/putrescine import ATP-binding protein PotA.